We begin with the raw amino-acid sequence, 190 residues long: Myophilin (190 aa).

The tract at residues 1 to 23 is disordered; it reads MSNVPPPSGLSYQVKKKLEGKRD. A Calponin-homology (CH) domain is found at 24–130; sequence KDQENEALEW…RTLFALGRTC (107 aa). The stretch at 165–189 is one Calponin-like repeat; that stretch reads VSLQYGSNKGASQAGINMGKQRMIM.

The protein belongs to the calponin family. Muscle specific.

The chain is Myophilin from Echinococcus granulosus (Hydatid tapeworm).